A 248-amino-acid chain; its full sequence is Probable transcriptional regulatory protein BBta_6910 (248 aa).

It belongs to the TACO1 family.

The protein localises to the cytoplasm. The protein is Probable transcriptional regulatory protein BBta_6910 of Bradyrhizobium sp. (strain BTAi1 / ATCC BAA-1182).